Here is a 449-residue protein sequence, read N- to C-terminus: Tubulin beta chain (449 aa).

GTP contacts are provided by Gln11, Glu69, Ser138, Gly142, Thr143, Gly144, Asn204, and Asn226. Position 69 (Glu69) interacts with Mg(2+).

This sequence belongs to the tubulin family. As to quaternary structure, dimer of alpha and beta chains. A typical microtubule is a hollow water-filled tube with an outer diameter of 25 nm and an inner diameter of 15 nM. Alpha-beta heterodimers associate head-to-tail to form protofilaments running lengthwise along the microtubule wall with the beta-tubulin subunit facing the microtubule plus end conferring a structural polarity. Microtubules usually have 13 protofilaments but different protofilament numbers can be found in some organisms and specialized cells. The cofactor is Mg(2+).

Its subcellular location is the cytoplasm. It is found in the cytoskeleton. Its function is as follows. Tubulin is the major constituent of microtubules, a cylinder consisting of laterally associated linear protofilaments composed of alpha- and beta-tubulin heterodimers. Microtubules grow by the addition of GTP-tubulin dimers to the microtubule end, where a stabilizing cap forms. Below the cap, tubulin dimers are in GDP-bound state, owing to GTPase activity of alpha-tubulin. The protein is Tubulin beta chain (TUB2) of Candida albicans (Yeast).